A 175-amino-acid chain; its full sequence is Interferon a3 (175 aa).

Positions 1–23 (MYTMQSWSCIFLIICSMQSVCHC) are cleaved as a signal peptide. A disulfide bond links cysteine 24 and cysteine 120.

It belongs to the alpha/beta interferon family. As to expression, isoform 1 and isoform 2 are expressed in several tissues, including gill, spleen, intestine, kidney and skin.

The protein localises to the secreted. It is found in the cytoplasm. Its subcellular location is the cytosol. Functionally, key player in antiviral response. Induces expression of TLRs, including that of TLR3, TLR9 and TLR8a1, and that of cytosolic pattern recognition receptors, including RIGI, IFIH1/MDA5 and DHX58/LGP2. Also induces MX1 and its own expression. In the presence of intracellular IFNAR2 (iIFNAR2) and IFNAR1B, intracellular isoform 3 may mediate STAT1 and STAT2 phosphorylation and induction of EIF2AK2, MX1 and RSAD2. The protein is Interferon a3 of Oncorhynchus mykiss (Rainbow trout).